The following is a 500-amino-acid chain: Lysine--tRNA ligase (500 aa).

2 residues coordinate Mg(2+): glutamate 411 and glutamate 418.

It belongs to the class-II aminoacyl-tRNA synthetase family. As to quaternary structure, homodimer. Mg(2+) serves as cofactor.

It is found in the cytoplasm. The enzyme catalyses tRNA(Lys) + L-lysine + ATP = L-lysyl-tRNA(Lys) + AMP + diphosphate. The polypeptide is Lysine--tRNA ligase (Azoarcus sp. (strain BH72)).